The sequence spans 74 residues: ATP synthase subunit 9, mitochondrial (74 aa).

2 consecutive transmembrane segments (helical) span residues 8–28 (IGAG…GNVF) and 50–70 (ILGF…AFLI).

This sequence belongs to the ATPase C chain family. As to quaternary structure, F-type ATPases have 2 components, CF(1) - the catalytic core - and CF(0) - the membrane proton channel. CF(1) has five subunits: alpha(3), beta(3), gamma(1), delta(1), epsilon(1). CF(0) has three main subunits: a, b and c.

Its subcellular location is the mitochondrion membrane. Its function is as follows. This protein is one of the chains of the nonenzymatic membrane component (F0) of mitochondrial ATPase. The protein is ATP synthase subunit 9, mitochondrial (ATP9) of Brassica napus (Rape).